The following is a 374-amino-acid chain: Chaperone protein DnaJ (374 aa).

The 66-residue stretch at 5 to 70 folds into the J domain; it reads DYYEVLGISR…SKRAAYDQFG (66 aa). The CR-type zinc finger occupies 129 to 207; the sequence is GKTVKINIPG…CHGQGRVRQE (79 aa). Zn(2+) is bound by residues Cys142, Cys145, Cys159, Cys162, Cys181, Cys184, Cys195, and Cys198. CXXCXGXG motif repeat units follow at residues 142 to 149, 159 to 166, 181 to 188, and 195 to 202; these read CEACDGSG, CGTCQGMG, CPTCRGSG, and CKSCHGQG. Positions 216-238 are disordered; sequence PGVDTGDRIRLSGEGEMGVDGGP.

It belongs to the DnaJ family. Homodimer. Zn(2+) serves as cofactor.

It is found in the cytoplasm. In terms of biological role, participates actively in the response to hyperosmotic and heat shock by preventing the aggregation of stress-denatured proteins and by disaggregating proteins, also in an autonomous, DnaK-independent fashion. Unfolded proteins bind initially to DnaJ; upon interaction with the DnaJ-bound protein, DnaK hydrolyzes its bound ATP, resulting in the formation of a stable complex. GrpE releases ADP from DnaK; ATP binding to DnaK triggers the release of the substrate protein, thus completing the reaction cycle. Several rounds of ATP-dependent interactions between DnaJ, DnaK and GrpE are required for fully efficient folding. Also involved, together with DnaK and GrpE, in the DNA replication of plasmids through activation of initiation proteins. The polypeptide is Chaperone protein DnaJ (Marinobacter nauticus (strain ATCC 700491 / DSM 11845 / VT8) (Marinobacter aquaeolei)).